A 144-amino-acid polypeptide reads, in one-letter code: D-aminoacyl-tRNA deacylase (144 aa).

The short motif at 136-137 (GP) is the Gly-cisPro motif, important for rejection of L-amino acids element.

The protein belongs to the DTD family. As to quaternary structure, homodimer.

The protein localises to the cytoplasm. It catalyses the reaction glycyl-tRNA(Ala) + H2O = tRNA(Ala) + glycine + H(+). The catalysed reaction is a D-aminoacyl-tRNA + H2O = a tRNA + a D-alpha-amino acid + H(+). An aminoacyl-tRNA editing enzyme that deacylates mischarged D-aminoacyl-tRNAs. Also deacylates mischarged glycyl-tRNA(Ala), protecting cells against glycine mischarging by AlaRS. Acts via tRNA-based rather than protein-based catalysis; rejects L-amino acids rather than detecting D-amino acids in the active site. By recycling D-aminoacyl-tRNA to D-amino acids and free tRNA molecules, this enzyme counteracts the toxicity associated with the formation of D-aminoacyl-tRNA entities in vivo and helps enforce protein L-homochirality. In Pasteurella multocida (strain Pm70), this protein is D-aminoacyl-tRNA deacylase.